Reading from the N-terminus, the 400-residue chain is Envelope glycoprotein M (400 aa).

Residues 1–16 lie on the Intravirion side of the membrane; it reads MRASKSDRFLMSSWVK. Residues 17–37 traverse the membrane as a helical segment; the sequence is LLFVAVIMYICSAVVPMAATY. Over 38 to 76 the chain is Virion surface; that stretch reads EGLGFPCYFNNLVNYSALNLTVRNSAKHLTPTLFLEKPE. Residues 77–97 traverse the membrane as a helical segment; the sequence is MLVYIFWTFIVDGIAIVYYCL. Over 98–113 the chain is Intravirion; the sequence is AAVAVYRAKHVHATTM. The chain crosses the membrane as a helical span at residues 114–134; sequence MSMQSWIALLGSHSVLYVAIL. Residues 135-152 lie on the Virion surface side of the membrane; it reads RMWSMQLFIHVLSYKHVL. The chain crosses the membrane as a helical span at residues 153–173; the sequence is MAAFVYCIHFCISFAHIQSLI. Over 174-208 the chain is Intravirion; the sequence is TCNSAQWEIPLLEQHVPDNTMMESLLTRWKPVCVN. Residues 209–229 form a helical membrane-spanning segment; that stretch reads LYLSTTALEMLLFSLSTMMAV. Residues 230-234 are Virion surface-facing; the sequence is GNSFY. A helical transmembrane segment spans residues 235–255; that stretch reads VLVSDAIFGAVNMFLALTVVW. Topologically, residues 256-270 are intravirion; the sequence is YINTEFFLVKFMRRQ. The helical transmembrane segment at 271-291 threads the bilayer; sequence VGFYVGVFVGYLILLLPVIRY. Topologically, residues 292-300 are virion surface; it reads ENAFVQANL. A helical membrane pass occupies residues 301-321; it reads HYIVAINISCIPILCILAIVI. The Intravirion portion of the chain corresponds to 322–400; that stretch reads RVIRSDWGLC…EIDETQMIFI (79 aa). Residues 348 to 394 are disordered; it reads DRTPTVHQKPPPLPAKTRARAKVKDISTPAPRTQYQSDHESDSEIDE.

This sequence belongs to the herpesviridae glycoprotein M family. As to quaternary structure, interacts (via N-terminus) with gN (via N-terminus). The gM-gN heterodimer forms the gCII complex. Post-translationally, N-glycosylated.

The protein localises to the virion membrane. Its subcellular location is the host Golgi apparatus. It localises to the host trans-Golgi network. The protein resides in the host endosome membrane. It is found in the host nucleus inner membrane. In terms of biological role, envelope glycoprotein important for virion assembly and egress. Plays a role in the correct incorporation of gH-gL into virion membrane. Directs the glycoprotein N (gN) to the host trans-Golgi network. This chain is Envelope glycoprotein M, found in Homo sapiens (Human).